The sequence spans 158 residues: Transcriptional regulator MraZ (158 aa).

SpoVT-AbrB domains lie at 5-50 (IYET…GGVY) and 91-134 (AVEC…SQSE).

It belongs to the MraZ family. In terms of assembly, forms oligomers.

Its subcellular location is the cytoplasm. The protein localises to the nucleoid. The sequence is that of Transcriptional regulator MraZ from Geobacter metallireducens (strain ATCC 53774 / DSM 7210 / GS-15).